The sequence spans 254 residues: Proteasome activator complex subunit 3 (254 aa).

The residue at position 2 (A2) is an N-acetylalanine. 2 positions are modified to phosphoserine: S17 and S24. K195 carries the post-translational modification N6-acetyllysine; by P300/CBP. S247 is modified (phosphoserine; by CHEK2).

This sequence belongs to the PA28 family. Homoheptamer; the stability of the heptamer is essential for the specific activation of the trypsine-like subunit and inhibition of the chymotrypsin-like and postglutamyl-preferring (PGPH) subunits of the proteasome. Interacts with p53/TP53 and MDM2. Interacts with MAP3K3. Associates with the proteasome. Interacts with CCAR2. Interacts with PSME3IP1 (via C-terminus); the interaction is direct and promotes the association of PSME3 with the 20S proteasome. Interacts with COIL; the interaction is inhibited by PSME3IP1. In terms of assembly, (Microbial infection) Interacts with human cytomegalovirus UL27. Phosphorylated by MAP3K3. Phosphorylation at Ser-247 promotes its association with CCAR2. Post-translationally, acetylation at the major site Lys-195 is important for oligomerization and ability to degrade its target substrates. Deacetylated by SIRT1.

The protein resides in the nucleus. The protein localises to the cytoplasm. Subunit of the 11S REG-gamma (also called PA28-gamma) proteasome regulator, a doughnut-shaped homoheptamer which associates with the proteasome. 11S REG-gamma activates the trypsin-like catalytic subunit of the proteasome but inhibits the chymotrypsin-like and postglutamyl-preferring (PGPH) subunits. Facilitates the MDM2-p53/TP53 interaction which promotes ubiquitination- and MDM2-dependent proteasomal degradation of p53/TP53, limiting its accumulation and resulting in inhibited apoptosis after DNA damage. May also be involved in cell cycle regulation. Mediates CCAR2 and CHEK2-dependent SIRT1 inhibition. In Homo sapiens (Human), this protein is Proteasome activator complex subunit 3 (PSME3).